A 278-amino-acid chain; its full sequence is Potassium/proton antiporter CemA (278 aa).

4 helical membrane-spanning segments follow: residues 60 to 80 (YLLLLITVPLIVNQISKSFVF), 155 to 175 (AMKNLLADVLAFVTFVYLIVT), 201 to 221 (FLIILFTDIFVGFHSTHGWEV), and 239 to 259 (IFLFIATFPVVLDTVFKYWIF).

The protein belongs to the CemA family.

The protein localises to the plastid. Its subcellular location is the chloroplast inner membrane. The catalysed reaction is K(+)(in) + H(+)(out) = K(+)(out) + H(+)(in). Its function is as follows. Contributes to K(+)/H(+) antiport activity by supporting proton efflux to control proton extrusion and homeostasis in chloroplasts in a light-dependent manner to modulate photosynthesis. Prevents excessive induction of non-photochemical quenching (NPQ) under continuous-light conditions. Indirectly promotes efficient inorganic carbon uptake into chloroplasts. This is Potassium/proton antiporter CemA from Rhodomonas salina (Cryptomonas salina).